The sequence spans 273 residues: Phosphatidylglycerol--prolipoprotein diacylglyceryl transferase (273 aa).

Transmembrane regions (helical) follow at residues 21–41 (VSVRWYGLMYLVGFMFALWLA), 60–80 (LLFAGFLGVVIGGRVGYVIFY), 95–115 (VWTGGMSFHGGLLGVITAMFW), 124–144 (FFGVADFVAPLVPFGLGMGRM), 176–196 (SQLYEMFLEGIVLFFILNWFI), 203–223 (GAVSGLFLAGYGTFRFLVEFV), and 237–257 (ISMGQILSSPMIILGILMMVW). Arg-143 provides a ligand contact to a 1,2-diacyl-sn-glycero-3-phospho-(1'-sn-glycerol).

It belongs to the Lgt family.

The protein localises to the cell inner membrane. The enzyme catalyses L-cysteinyl-[prolipoprotein] + a 1,2-diacyl-sn-glycero-3-phospho-(1'-sn-glycerol) = an S-1,2-diacyl-sn-glyceryl-L-cysteinyl-[prolipoprotein] + sn-glycerol 1-phosphate + H(+). It functions in the pathway protein modification; lipoprotein biosynthesis (diacylglyceryl transfer). Functionally, catalyzes the transfer of the diacylglyceryl group from phosphatidylglycerol to the sulfhydryl group of the N-terminal cysteine of a prolipoprotein, the first step in the formation of mature lipoproteins. The sequence is that of Phosphatidylglycerol--prolipoprotein diacylglyceryl transferase from Vibrio campbellii (strain ATCC BAA-1116).